The sequence spans 262 residues: MSFLAIDIGNTRLKWGLYDAAKPGARLLAHGAVFLETIEQLAEQDWARLPHPTAMLGCAVAGDAVRRRTEEQLELWDLTPHWVVSQPVGGGIVNGYDHPSRLGSDRWVAMVGARERILEQTGPGARPVPAIVVMVGTAVTVDAVDPDGCFIGGLILPGFGLMLKALEMGTAGLRVPTGDVCEFPTNTSDALMSGGACGIAGAIERMHRQLQQRCGVAPRILMSGGAATKLAQIMALPVEVVDTLVFDGLLRLASDRVAAGLA.

7–14 (DIGNTRLK) is a binding site for ATP. Substrate-binding positions include Y96 and 103–106 (GSDR). Residue D105 is the Proton acceptor of the active site. T137 provides a ligand contact to ATP. Substrate is bound at residue T187.

Belongs to the type III pantothenate kinase family. Homodimer. NH4(+) serves as cofactor. It depends on K(+) as a cofactor.

It localises to the cytoplasm. It catalyses the reaction (R)-pantothenate + ATP = (R)-4'-phosphopantothenate + ADP + H(+). Its pathway is cofactor biosynthesis; coenzyme A biosynthesis; CoA from (R)-pantothenate: step 1/5. In terms of biological role, catalyzes the phosphorylation of pantothenate (Pan), the first step in CoA biosynthesis. The chain is Type III pantothenate kinase from Leptothrix cholodnii (strain ATCC 51168 / LMG 8142 / SP-6) (Leptothrix discophora (strain SP-6)).